Consider the following 352-residue polypeptide: 3'(2'),5'-bisphosphate nucleotidase (352 aa).

Catalysis depends on aspartate 45, which acts as the Proton acceptor. Residues glutamate 68, aspartate 133, isoleucine 135, and aspartate 136 each coordinate Mg(2+). The active-site Proton acceptor is threonine 138. Positions 138, 240, 264, 267, 281, and 294 each coordinate adenosine 3',5'-bisphosphate. Positions 240, 264, 267, 281, and 294 each coordinate AMP. Aspartate 294 serves as a coordination point for Mg(2+).

This sequence belongs to the inositol monophosphatase superfamily. Mg(2+) is required as a cofactor.

It catalyses the reaction 3'-phosphoadenylyl sulfate + H2O = adenosine 5'-phosphosulfate + phosphate. It carries out the reaction adenosine 3',5'-bisphosphate + H2O = AMP + phosphate. The catalysed reaction is adenosine 2',5'-bisphosphate + H2O = AMP + phosphate. Functionally, phosphatase that converts adenosine 3'-phosphate 5'-phosphosulfate (PAPS) to adenosine 5'-phosphosulfate (APS) and 3'(2')-phosphoadenosine 5'-phosphate (PAP) to AMP. May regulate the flux of sulfur in the sulfur-activation pathway by converting PAPS to APS. Involved in osmoadaptation. The chain is 3'(2'),5'-bisphosphate nucleotidase from Emericella nidulans (strain FGSC A4 / ATCC 38163 / CBS 112.46 / NRRL 194 / M139) (Aspergillus nidulans).